Consider the following 471-residue polypeptide: Mitochondrial distribution and morphology protein 10 (471 aa).

Residues 313 to 338 (SNSAATPPRIKNSDSQVLSNNSTDSK) are disordered. Polar residues predominate over residues 325–338 (SDSQVLSNNSTDSK).

Belongs to the MDM10 family. Component of the ER-mitochondria encounter structure (ERMES) or MDM complex, composed of MMM1, MDM10, MDM12 and MDM34. Associates with the mitochondrial outer membrane sorting assembly machinery SAM(core) complex.

The protein resides in the mitochondrion outer membrane. In terms of biological role, component of the ERMES/MDM complex, which serves as a molecular tether to connect the endoplasmic reticulum and mitochondria. Components of this complex are involved in the control of mitochondrial shape and protein biogenesis and may function in phospholipid exchange. MDM10 is involved in the late assembly steps of the general translocase of the mitochondrial outer membrane (TOM complex). Functions in the TOM40-specific route of the assembly of outer membrane beta-barrel proteins, including the association of TOM40 with the receptor TOM22 and small TOM proteins. Can associate with the SAM(core) complex as well as the MDM12-MMM1 complex, both involved in late steps of the major beta-barrel assembly pathway, that is responsible for biogenesis of all outer membrane beta-barrel proteins. May act as a switch that shuttles between both complexes and channels precursor proteins into the TOM40-specific pathway. Plays a role in mitochondrial morphology and in the inheritance of mitochondria. This is Mitochondrial distribution and morphology protein 10 from Debaryomyces hansenii (strain ATCC 36239 / CBS 767 / BCRC 21394 / JCM 1990 / NBRC 0083 / IGC 2968) (Yeast).